Reading from the N-terminus, the 514-residue chain is Uridylate cyclase (514 aa).

Guanylate cyclase domains follow at residues 49 to 190 (VHMY…AKLA) and 286 to 428 (VSLY…EKRQ). A ribonucleoside 5'-triphosphate contacts are provided by residues tyrosine 52, arginine 105, phenylalanine 178, 184–188 (NHAAK), and 291–296 (DIDGFT). Residues aspartate 291, isoleucine 292, and aspartate 339 each contribute to the Ca(2+) site. A Mn(2+)-binding site is contributed by aspartate 291. A disordered region spans residues 495–514 (IRADERQVQPHSRQKVDGSR). Basic and acidic residues predominate over residues 496-514 (RADERQVQPHSRQKVDGSR).

This sequence belongs to the adenylyl cyclase class-4/guanylyl cyclase family. Pyrimidine cyclase subfamily. As to quaternary structure, monomer. The cofactor is a divalent metal cation.

Its subcellular location is the cytoplasm. The enzyme catalyses UTP = 3',5'-cyclic UMP + diphosphate. Functionally, pycsar (pyrimidine cyclase system for antiphage resistance) provides immunity against bacteriophage. The pyrimidine cyclase (PycC) synthesizes cyclic nucleotides in response to infection; these serve as specific second messenger signals. The signals activate the adjacent effector, leading to bacterial cell death and abortive phage infection. A clade A Pycsar system. The pyrimidine cyclase gene of a two-gene Pycsar system, generates cyclic UMP (cUMP) from UTP, has little to no activity on ATP, CTP or GTP. Expression of this and adjacent effector PaPycTIR (AC P0DV41) probably confers resistance to bacteriophage. The genes are probably only expressed in response to bacteriophage infection. Does not have adenylyl or guanylyl cyclase activity. This chain is Uridylate cyclase, found in Pseudomonas aeruginosa.